A 354-amino-acid polypeptide reads, in one-letter code: Uroporphyrinogen decarboxylase (354 aa).

Residues Arg-27 to Arg-31, Asp-77, Tyr-154, Thr-209, and His-327 each bind substrate.

The protein belongs to the uroporphyrinogen decarboxylase family. In terms of assembly, homodimer.

It is found in the cytoplasm. The enzyme catalyses uroporphyrinogen III + 4 H(+) = coproporphyrinogen III + 4 CO2. It functions in the pathway porphyrin-containing compound metabolism; protoporphyrin-IX biosynthesis; coproporphyrinogen-III from 5-aminolevulinate: step 4/4. Catalyzes the decarboxylation of four acetate groups of uroporphyrinogen-III to yield coproporphyrinogen-III. This Enterobacter sp. (strain 638) protein is Uroporphyrinogen decarboxylase.